Consider the following 237-residue polypeptide: Chloride intracellular channel protein 3 (237 aa).

Residues 1–89 are required for insertion into the membrane; that stretch reads MAETTKLQLF…EEFLEETLGP (89 aa). The GST N-terminal domain maps to 13-91; it reads ASEDGESVGH…FLEETLGPPD (79 aa). Residues 23-26 carry the G-site motif; the sequence is CPSC. A disulfide bond links Cys23 and Cys26. Residues 25–45 traverse the membrane as a helical segment; sequence SCQRLFMVLLLKGVPFTLTTV. One can recognise a GST C-terminal domain in the interval 69 to 236; the sequence is DGDVKTDTLQ…LAAYQPAVHP (168 aa). Ser160 is modified (phosphoserine).

It belongs to the chloride channel CLIC family. As to quaternary structure, associated with the C-terminal of MAPK15.

The protein localises to the nucleus. The protein resides in the membrane. It localises to the cell membrane. It is found in the cytoplasm. Its subcellular location is the secreted. The protein localises to the extracellular space. The protein resides in the extracellular matrix. The enzyme catalyses chloride(in) = chloride(out). Functionally, in the soluble state, catalyzes glutaredoxin-like thiol disulfide exchange reactions with reduced glutathione as electron donor. Reduced in a glutathione-dependent way and secreted into the extracellular matrix where it activates TGM2 and promotes blood vessel growth during tissue remodeling as occurs in tumorigenesis. Can reduce specific cysteines in TGM2 and regulate cofactor binding. Can insert into membranes and form outwardly rectifying chloride ion channels. May participate in cellular growth control. The sequence is that of Chloride intracellular channel protein 3 from Mus musculus (Mouse).